Reading from the N-terminus, the 133-residue chain is Protein msa (133 aa).

4 helical membrane passes run 3–23 (YLIL…AIGL), 27–47 (ILAA…ILFF), 55–75 (YIFF…VHLM), and 103–123 (FGFD…IVLY).

The protein resides in the cell membrane. Accessory element involved in the expression of sarA and several virulence factors. Modulates SarA production and/or function in a strain-dependent manner. Affects the transcription of the accessory gene regulator (agr) and genes encoding virulence factors including alpha toxin (hla) and protein A (spa). The protein is Protein msa (msa) of Staphylococcus aureus (strain USA300).